The chain runs to 251 residues: Cold shock-induced protein TIR2 (251 aa).

Residues 1–18 (MAYIKIALLAAIAALASA) form the signal peptide. Residues 207–225 (ASAISQISDGQVQATSTVS) form a PIR1/2/3 repeat. Residue Gly-231 is the site of GPI-anchor amidated glycine attachment. The propeptide at 232–251 (AAKAVIGMGAGVMAAAAMLL) is removed in mature form.

It belongs to the SRP1/TIP1 family. Post-translationally, the GPI-anchor is attached to the protein in the endoplasmic reticulum and serves to target the protein to the cell surface. There, the glucosamine-inositol phospholipid moiety is cleaved off and the GPI-modified mannoprotein is covalently attached via its lipidless GPI glycan remnant to the 1,6-beta-glucan of the outer cell wall layer. In terms of processing, covalently linked to beta-1,3-glucan of the inner cell wall layer via an alkali-sensitive ester linkage between the gamma-carboxyl group of glutamic acids, arising from a specific glutamine within the PIR1/2/3 repeat, and hydroxyl groups of glucoses of beta-1,3-glucan chains.

The protein resides in the secreted. It is found in the cell wall. The protein localises to the membrane. In terms of biological role, component of the cell wall. This chain is Cold shock-induced protein TIR2 (TIR2), found in Saccharomyces cerevisiae (strain ATCC 204508 / S288c) (Baker's yeast).